Reading from the N-terminus, the 267-residue chain is Diaminopimelate epimerase (267 aa).

Substrate-binding residues include Asn-15 and Asn-66. Residue Cys-75 is the Proton donor of the active site. Substrate contacts are provided by residues 76–77 (GN), Asn-150, Asn-183, and 201–202 (ER). Cys-210 serves as the catalytic Proton acceptor. 211-212 (GT) contributes to the substrate binding site.

Belongs to the diaminopimelate epimerase family. As to quaternary structure, homodimer.

The protein localises to the cytoplasm. It carries out the reaction (2S,6S)-2,6-diaminopimelate = meso-2,6-diaminopimelate. Its pathway is amino-acid biosynthesis; L-lysine biosynthesis via DAP pathway; DL-2,6-diaminopimelate from LL-2,6-diaminopimelate: step 1/1. Functionally, catalyzes the stereoinversion of LL-2,6-diaminopimelate (L,L-DAP) to meso-diaminopimelate (meso-DAP), a precursor of L-lysine and an essential component of the bacterial peptidoglycan. The sequence is that of Diaminopimelate epimerase from Bacteroides thetaiotaomicron (strain ATCC 29148 / DSM 2079 / JCM 5827 / CCUG 10774 / NCTC 10582 / VPI-5482 / E50).